A 233-amino-acid polypeptide reads, in one-letter code: Small ribosomal subunit protein uS3 (233 aa).

The 69-residue stretch at 39 to 107 folds into the KH type-2 domain; sequence VRQFLMKTLE…PVQINISEVR (69 aa).

The protein belongs to the universal ribosomal protein uS3 family. As to quaternary structure, part of the 30S ribosomal subunit. Forms a tight complex with proteins S10 and S14.

Binds the lower part of the 30S subunit head. Binds mRNA in the 70S ribosome, positioning it for translation. This chain is Small ribosomal subunit protein uS3, found in Buchnera aphidicola subsp. Acyrthosiphon pisum (strain APS) (Acyrthosiphon pisum symbiotic bacterium).